Reading from the N-terminus, the 368-residue chain is tRNA/tmRNA (uracil-C(5))-methyltransferase (368 aa).

5 residues coordinate S-adenosyl-L-methionine: Gln-190, Tyr-218, Asn-223, Glu-239, and Asp-301. Catalysis depends on Cys-326, which acts as the Nucleophile. Glu-360 functions as the Proton acceptor in the catalytic mechanism.

This sequence belongs to the class I-like SAM-binding methyltransferase superfamily. RNA M5U methyltransferase family. TrmA subfamily.

It carries out the reaction uridine(54) in tRNA + S-adenosyl-L-methionine = 5-methyluridine(54) in tRNA + S-adenosyl-L-homocysteine + H(+). The catalysed reaction is uridine(341) in tmRNA + S-adenosyl-L-methionine = 5-methyluridine(341) in tmRNA + S-adenosyl-L-homocysteine + H(+). Functionally, dual-specificity methyltransferase that catalyzes the formation of 5-methyluridine at position 54 (m5U54) in all tRNAs, and that of position 341 (m5U341) in tmRNA (transfer-mRNA). The protein is tRNA/tmRNA (uracil-C(5))-methyltransferase of Aliivibrio salmonicida (strain LFI1238) (Vibrio salmonicida (strain LFI1238)).